The following is a 295-amino-acid chain: Nitrogenase iron protein 1 (295 aa).

An ATP-binding site is contributed by G13 to S20. C101 is a [4Fe-4S] cluster binding site. R104 is subject to ADP-ribosylarginine; by dinitrogenase reductase ADP-ribosyltransferase. Residue C135 participates in [4Fe-4S] cluster binding.

The protein belongs to the NifH/BchL/ChlL family. Homodimer. Requires [4Fe-4S] cluster as cofactor. The reversible ADP-ribosylation of Arg-104 inactivates the nitrogenase reductase and regulates nitrogenase activity.

The catalysed reaction is N2 + 8 reduced [2Fe-2S]-[ferredoxin] + 16 ATP + 16 H2O = H2 + 8 oxidized [2Fe-2S]-[ferredoxin] + 2 NH4(+) + 16 ADP + 16 phosphate + 6 H(+). In terms of biological role, the key enzymatic reactions in nitrogen fixation are catalyzed by the nitrogenase complex, which has 2 components: the iron protein and the molybdenum-iron protein. The polypeptide is Nitrogenase iron protein 1 (nifH1) (Nostoc sp. (strain PCC 7120 / SAG 25.82 / UTEX 2576)).